The chain runs to 682 residues: Potassium-transporting ATPase ATP-binding subunit (682 aa).

The next 4 membrane-spanning stretches (helical) occupy residues 44–64 (VMAVVMGGTLLAAVITASGHG), 66–86 (AGFGWAVTAILFVTVLFGNFA), 233–253 (LTFLIVVASLPAIAGFVGVTL), and 257–277 (LLIALLVCLIPTTIGGLLPAI). D310 (4-aspartylphosphate intermediate) is an active-site residue. Residues D347, E351, 377 to 384 (FTAQTRMS), and K395 each bind ATP. The Mg(2+) site is built by D518 and D522. 3 helical membrane-spanning segments follow: residues 588 to 608 (FAILPALFAAAIPSMAALNVM), 616 to 636 (AVLAALIFNALIIPALIPLAL), and 658 to 678 (GLGGVLLPFAAIKLIDLALVA).

Belongs to the cation transport ATPase (P-type) (TC 3.A.3) family. Type IA subfamily. As to quaternary structure, the system is composed of three essential subunits: KdpA, KdpB and KdpC.

It is found in the cell inner membrane. It catalyses the reaction K(+)(out) + ATP + H2O = K(+)(in) + ADP + phosphate + H(+). In terms of biological role, part of the high-affinity ATP-driven potassium transport (or Kdp) system, which catalyzes the hydrolysis of ATP coupled with the electrogenic transport of potassium into the cytoplasm. This subunit is responsible for energy coupling to the transport system and for the release of the potassium ions to the cytoplasm. The sequence is that of Potassium-transporting ATPase ATP-binding subunit from Xanthomonas campestris pv. campestris (strain ATCC 33913 / DSM 3586 / NCPPB 528 / LMG 568 / P 25).